A 236-amino-acid chain; its full sequence is Small ribosomal subunit protein uS5 (236 aa).

The 64-residue stretch at 61–124 folds into the S5 DRBM domain; it reads ENQEILDIAL…NYAKLNIIEI (64 aa).

The protein belongs to the universal ribosomal protein uS5 family. Part of the 30S ribosomal subunit. Contacts protein S4.

In terms of biological role, with S4 and S12 plays an important role in translational accuracy. This Pyrococcus abyssi (strain GE5 / Orsay) protein is Small ribosomal subunit protein uS5.